A 452-amino-acid polypeptide reads, in one-letter code: tRNA modification GTPase MnmE (452 aa).

3 residues coordinate (6S)-5-formyl-5,6,7,8-tetrahydrofolate: R28, E85, and K124. The 159-residue stretch at 220-378 (GMNVVLVGRP…LRTELLRAAG (159 aa)) folds into the TrmE-type G domain. K(+) is bound at residue N230. Residues 230–235 (NVGKSS), 249–255 (TDVAGTT), 274–277 (DTAG), and 359–361 (SAR) each bind GTP. S234 contacts Mg(2+). T249, V251, and T254 together coordinate K(+). T255 contacts Mg(2+). K452 provides a ligand contact to (6S)-5-formyl-5,6,7,8-tetrahydrofolate.

It belongs to the TRAFAC class TrmE-Era-EngA-EngB-Septin-like GTPase superfamily. TrmE GTPase family. As to quaternary structure, homodimer. Heterotetramer of two MnmE and two MnmG subunits. The cofactor is K(+).

It is found in the cytoplasm. Exhibits a very high intrinsic GTPase hydrolysis rate. Involved in the addition of a carboxymethylaminomethyl (cmnm) group at the wobble position (U34) of certain tRNAs, forming tRNA-cmnm(5)s(2)U34. This chain is tRNA modification GTPase MnmE, found in Azoarcus sp. (strain BH72).